An 867-amino-acid chain; its full sequence is Coiled-coil domain-containing protein 80 (867 aa).

Positions 1–18 (MRARYMLGFGVLCLLTWA) are cleaved as a signal peptide. 2 disordered regions span residues 83 to 121 (RKVL…SSAG) and 282 to 539 (DSQV…GTLA). The span at 95–104 (GTRNPIQQDD) shows a compositional bias: polar residues. The span at 288–297 (PTERRKEIRK) shows a compositional bias: basic and acidic residues. Residues 301–370 (RPTTTTTPAP…PRTTRANTTP (70 aa)) show a composition bias toward low complexity. The span at 401–412 (ARYRDNHTSKKE) shows a compositional bias: basic and acidic residues. Residues 426–435 (KPTKVRPTKK) show a composition bias toward basic residues. Positions 436 to 451 (KNGDKDISNAYEEKYD) are enriched in basic and acidic residues. A compositionally biased stretch (basic residues) spans 471–483 (KRGKGKTDKKKKK). Composition is skewed to basic and acidic residues over residues 484-504 (DKTD…DGKG) and 514-523 (KILEKEDYQK).

This sequence belongs to the CCDC80 family. In terms of assembly, binds to various extracellular matrix proteins.

The protein resides in the secreted. Its subcellular location is the extracellular space. The protein localises to the extracellular matrix. Promotes cell adhesion and matrix assembly. In Danio rerio (Zebrafish), this protein is Coiled-coil domain-containing protein 80 (ccdc80).